A 449-amino-acid chain; its full sequence is Exodeoxyribonuclease 7 large subunit (449 aa).

The protein belongs to the XseA family. Heterooligomer composed of large and small subunits.

It is found in the cytoplasm. It catalyses the reaction Exonucleolytic cleavage in either 5'- to 3'- or 3'- to 5'-direction to yield nucleoside 5'-phosphates.. Bidirectionally degrades single-stranded DNA into large acid-insoluble oligonucleotides, which are then degraded further into small acid-soluble oligonucleotides. The polypeptide is Exodeoxyribonuclease 7 large subunit (Salmonella typhi).